A 968-amino-acid polypeptide reads, in one-letter code: MLTEASLSIWGWGSLGIVLFLITFGPFVIFYLTFYILCFVGGGLVVTLLFGKTNSEKYLEQCEHSFLPPTSPGVPKCLEEMKREARTIKIDRRLTGANIIDEPLQQVIQFSLRDYVQYWYYTLSDDESFLLEIRQTLQNALIQFATRSKEIDWQPYFTTRIVDDFGTHLRVFRKAQQKITEKDDQVKGTAEDLVDTFFEVEVEMEKEVCRDLVCTSPKDEEGFLRDLCEVLLYLLLPPGDFQNKIMRYFVREILARGILLPLINQLSDPDYINQYVIWMIRDSNCNYEAFMNIIKLSDNIGELEAVRDKAAEELQYLRSLDTAGDDINTIKNQINSLLFVKKVCDSRIQRLQSGKEINTVKLAANFGKLCTVPLDSILVDNVALQFFMDYMQQTGGQAHLFFWMTVEGYRVTAQQQLEVLLSRQRDGKHQTNQTKGLLRAAAVGIYEQYLSEKASPRVTVDDYLVAKLADTLNHEDPTPEIFDDIQRKVYELMLRDERFYPSFRQNALYVRMLAELDMLKDPSFRGSDDGDGESFNGSPTGSINLSLDDLSNVSSDDSVQLHAYISDTVYADYDPYAVAGVCNDHGKTYALYAITVHRRNLNSEEMWKTYRRYSDFHDFHMRITEQFESLSSILKLPGKKTFNNMDRDFLEKRKKDLNAYLQLLLAPEMMKASPALAHYVYDFLENKAYSKGKGDFARKMDTFVNPLRNSMRNVSNAVKSLPDSLAEGMTKMSDNMGKMSERLGQDIKQSFFKVPPLIPKTDSDPEHRRVSAQLDDNVDDNIPLRVMLLLMDEVFDLKERNQWLRRNIKNLLQQLIRATYGDTINRKIVDHVDWMTSPEQVADSVKRFRDAFWPNGILAEAVPCRDKSIRMRTRVAGKTKLLAIMPDELKHIIGAETTRKGILRVFEMFQHNQLNRRMVYVFLEGFLETLFPQYKFRELFNKLHSRSKQMQKYKQKLQTTQAPSLQKR.

Residues 97–284 form the PXA domain; sequence ANIIDEPLQQ…YVIWMIRDSN (188 aa). The region spanning 373–496 is the RGS domain; the sequence is PLDSILVDNV…RKVYELMLRD (124 aa). Positions 570–691 constitute a PX domain; that stretch reads YADYDPYAVA…DFLENKAYSK (122 aa). Residues R612, S614, K639, and R653 each contribute to the a 1,2-diacyl-sn-glycero-3-phospho-(1D-myo-inositol-3-phosphate) site.

It belongs to the sorting nexin family.

It is found in the early endosome membrane. Functionally, may be involved in several stages of intracellular trafficking. May play a role in endosome homeostasis. Acts as a GAP for Galphas. The chain is Sorting nexin-13 (SNX13) from Homo sapiens (Human).